Here is a 233-residue protein sequence, read N- to C-terminus: Beta-fibrinogenase brevinase (233 aa).

The Peptidase S1 domain occupies 1–224; that stretch reads VIGGDECNIN…YIDWIQSIIA (224 aa). Disulfide bonds link Cys-7-Cys-138, Cys-25-Cys-41, Cys-73-Cys-231, Cys-117-Cys-185, Cys-149-Cys-164, and Cys-175-Cys-200. The Charge relay system role is filled by His-40. Residue Asn-54 is glycosylated (N-linked (GlcNAc...) asparagine). Asp-85 functions as the Charge relay system in the catalytic mechanism. A glycan (N-linked (GlcNAc...) asparagine) is linked at Asn-129. Residues 176–178 carry the Cell attachment site motif; that stretch reads RGD. Residue Ser-179 is the Charge relay system of the active site. An N-linked (GlcNAc...) asparagine glycan is attached at Asn-226.

It belongs to the peptidase S1 family. Snake venom subfamily. As to quaternary structure, heterodimer of the brevinase A chain and the brevinase B chain. As to expression, expressed by the venom gland.

The protein localises to the secreted. The fibrinolytic activity is completely inhibited by PMSF, diisopropylfluorophosphate (DFP), pefabloc, dithiothreitol (DTT) and Zn(2+), but not by Pepstatin A, E64, iodoacetate, chymostatin, tosyl-Lphenylalanine chloromethyl ketone (TPCK), soybean trypsin inhibitor (SBTI), phosphoramidon, Ca(2+), Co(2+), Cu(2+), Fe(2+), Mg(2+), Mn(2+), K(+), and Na(+). In terms of biological role, snake venom serine protease that has fibrinogenolytic activities. Preferentially cleaves the Bbeta-chain (FGB) and more slowly the Aa-chain (FGA) of fibrinogen, but does not affect the gamma-chain. Also has fibrinolytic activity. May play a role in antithrombotic reaction as well as thrombolytic reaction. This is Beta-fibrinogenase brevinase from Gloydius blomhoffii (Mamushi).